Consider the following 248-residue polypeptide: Ribonuclease 3 (248 aa).

One can recognise an RNase III domain in the interval 16-145 (TEGLETSIGY…LLAAMYLDGG (130 aa)). Glu-58 is a Mg(2+) binding site. Asp-62 is a catalytic residue. Residues Asn-131 and Glu-134 each coordinate Mg(2+). Residue Glu-134 is part of the active site. The DRBM domain occupies 172–241 (DFKTDFQELA…ARQCLERLET (70 aa)).

It belongs to the ribonuclease III family. As to quaternary structure, homodimer. It depends on Mg(2+) as a cofactor.

Its subcellular location is the cytoplasm. It carries out the reaction Endonucleolytic cleavage to 5'-phosphomonoester.. Digests double-stranded RNA. Involved in the processing of primary rRNA transcript to yield the immediate precursors to the large and small rRNAs (23S and 16S). Processes some mRNAs, and tRNAs when they are encoded in the rRNA operon. Processes pre-crRNA and tracrRNA of type II CRISPR loci if present in the organism. This chain is Ribonuclease 3, found in Geobacter sulfurreducens (strain ATCC 51573 / DSM 12127 / PCA).